We begin with the raw amino-acid sequence, 337 residues long: Protein-arginine kinase (337 aa).

One can recognise a Phosphagen kinase C-terminal domain in the interval 12–240 (IVIASKVKIL…NKLILREKNQ (229 aa)). ATP-binding positions include 15-19 (ASKVK), 162-166 (RAKVF), and 193-198 (KSIYNS).

This sequence belongs to the ATP:guanido phosphotransferase family.

The catalysed reaction is L-arginyl-[protein] + ATP = N(omega)-phospho-L-arginyl-[protein] + ADP + H(+). In terms of biological role, catalyzes the specific phosphorylation of arginine residues in proteins. The sequence is that of Protein-arginine kinase from Clostridium perfringens (strain ATCC 13124 / DSM 756 / JCM 1290 / NCIMB 6125 / NCTC 8237 / Type A).